The following is a 121-amino-acid chain: Large ribosomal subunit protein uL18 (121 aa).

Belongs to the universal ribosomal protein uL18 family. As to quaternary structure, part of the 50S ribosomal subunit; part of the 5S rRNA/L5/L18/L25 subcomplex. Contacts the 5S and 23S rRNAs.

Functionally, this is one of the proteins that bind and probably mediate the attachment of the 5S RNA into the large ribosomal subunit, where it forms part of the central protuberance. This chain is Large ribosomal subunit protein uL18, found in Caldanaerobacter subterraneus subsp. tengcongensis (strain DSM 15242 / JCM 11007 / NBRC 100824 / MB4) (Thermoanaerobacter tengcongensis).